Consider the following 456-residue polypeptide: Gamma-aminobutyric acid receptor subunit alpha-1 (456 aa).

The signal sequence occupies residues 1 to 27 (MKKSPGLSDYLWAWTLFLSTLTGRSYG). The Extracellular portion of the chain corresponds to 28–253 (QPSLQDELKD…FHLKRKIGYF (226 aa)). Residue asparagine 38 is glycosylated (N-linked (GlcNAc...) asparagine). 4-aminobutanoate is bound at residue arginine 94. Asparagine 138 carries N-linked (GlcNAc...) asparagine glycosylation. Residue threonine 157 coordinates 4-aminobutanoate. An intrachain disulfide couples cysteine 166 to cysteine 180. Residues 254–274 (VIQTYLPCIMTVILSQVSFWL) form a helical membrane-spanning segment. Topologically, residues 275 to 279 (NRESV) are cytoplasmic. A helical transmembrane segment spans residues 280 to 301 (PARTVFGVTTVLTMTTLSISAR). Residues 302-311 (NSLPKVAYAT) lie on the Extracellular side of the membrane. A helical membrane pass occupies residues 312–333 (AMDWFIAVCYAFVFSALIEFAT). At 334–421 (VNYFTKRGYA…TFNSVSKIDR (88 aa)) the chain is on the cytoplasmic side. The chain crosses the membrane as a helical span at residues 422 to 441 (LSRIAFPLLFGIFNLVYWAT). Residues 442–456 (YLNREPQLKAPTPHQ) are Extracellular-facing.

Belongs to the ligand-gated ion channel (TC 1.A.9) family. Gamma-aminobutyric acid receptor (TC 1.A.9.5) subfamily. GABRA1 sub-subfamily. In terms of assembly, heteropentamer, formed by a combination of alpha (GABRA1-6), beta (GABRB1-3), gamma (GABRG1-3), delta (GABRD), epsilon (GABRE), rho (GABRR1-3), pi (GABRP) and theta (GABRQ) subunits, each subunit exhibiting distinct physiological and pharmacological properties. Interacts with UBQLN1. Interacts with TRAK1. Interacts with KIF21B. Identified in a complex of 720 kDa composed of LHFPL4, NLGN2, GABRA1, GABRB2, GABRG2 and GABRB3. Interacts with LHFPL4. Interacts with NLGN2. Interacts with SHISA7; interaction leads to the regulation of GABA(A) receptor trafficking, channel deactivation kinetics and pharmacology. In terms of tissue distribution, cerebellar granule cells, Purkinje cells and stellate/basket cells.

Its subcellular location is the postsynaptic cell membrane. The protein resides in the cell membrane. The protein localises to the cytoplasmic vesicle membrane. It carries out the reaction chloride(in) = chloride(out). Its activity is regulated as follows. Allosterically activated by benzodiazepines, the neuroanesthetic alphaxalone and pentobarbital. Inhibited by the antagonist bicuculline. Potentiated by histamine. Functionally, alpha subunit of the heteropentameric ligand-gated chloride channel gated by gamma-aminobutyric acid (GABA), a major inhibitory neurotransmitter in the brain. GABA-gated chloride channels, also named GABA(A) receptors (GABAAR), consist of five subunits arranged around a central pore and contain GABA active binding site(s) located at the alpha and beta subunit interface(s). When activated by GABA, GABAARs selectively allow the flow of chloride anions across the cell membrane down their electrochemical gradient. Alpha-1/GABRA1-containing GABAARs are largely synaptic. Chloride influx into the postsynaptic neuron following GABAAR opening decreases the neuron ability to generate a new action potential, thereby reducing nerve transmission. GABAARs containing alpha-1 and beta-2 or -3 subunits exhibit synaptogenic activity; the gamma-2 subunit being necessary but not sufficient to induce rapid synaptic contacts formation. GABAARs function also as histamine receptor where histamine binds at the interface of two neighboring beta subunits and potentiates GABA response. GABAARs containing alpha, beta and epsilon subunits also permit spontaneous chloride channel activity while preserving the structural information required for GABA-gated openings. Alpha-1-mediated plasticity in the orbitofrontal cortex regulates context-dependent action selection. Together with rho subunits, may also control neuronal and glial GABAergic transmission in the cerebellum. This Bos taurus (Bovine) protein is Gamma-aminobutyric acid receptor subunit alpha-1 (GABRA1).